The chain runs to 229 residues: Cytochrome c oxidase subunit 2 (229 aa).

Topologically, residues 1–26 are mitochondrial intermembrane; sequence MSTWANLGLQDSASPLMEQLIFFHDH. The chain crosses the membrane as a helical span at residues 27–48; it reads ALLILVMITVLVGYLMFMLFFN. The Mitochondrial matrix segment spans residues 49–62; the sequence is SYVNRFLLHGQLIE. A helical membrane pass occupies residues 63–82; that stretch reads MIWTILPAIILLFIAMPSLR. The Mitochondrial intermembrane segment spans residues 83 to 229; it reads LLYLLDEINE…IKWISNSVNS (147 aa). Positions 161, 196, 198, 200, 204, and 207 each coordinate Cu cation. Glu198 serves as a coordination point for Mg(2+).

The protein belongs to the cytochrome c oxidase subunit 2 family. Component of the cytochrome c oxidase (complex IV, CIV), a multisubunit enzyme composed of a catalytic core of 3 subunits and several supernumerary subunits. The complex exists as a monomer or a dimer and forms supercomplexes (SCs) in the inner mitochondrial membrane with ubiquinol-cytochrome c oxidoreductase (cytochrome b-c1 complex, complex III, CIII). Cu cation is required as a cofactor.

Its subcellular location is the mitochondrion inner membrane. It carries out the reaction 4 Fe(II)-[cytochrome c] + O2 + 8 H(+)(in) = 4 Fe(III)-[cytochrome c] + 2 H2O + 4 H(+)(out). Functionally, component of the cytochrome c oxidase, the last enzyme in the mitochondrial electron transport chain which drives oxidative phosphorylation. The respiratory chain contains 3 multisubunit complexes succinate dehydrogenase (complex II, CII), ubiquinol-cytochrome c oxidoreductase (cytochrome b-c1 complex, complex III, CIII) and cytochrome c oxidase (complex IV, CIV), that cooperate to transfer electrons derived from NADH and succinate to molecular oxygen, creating an electrochemical gradient over the inner membrane that drives transmembrane transport and the ATP synthase. Cytochrome c oxidase is the component of the respiratory chain that catalyzes the reduction of oxygen to water. Electrons originating from reduced cytochrome c in the intermembrane space (IMS) are transferred via the dinuclear copper A center (CU(A)) of subunit 2 and heme A of subunit 1 to the active site in subunit 1, a binuclear center (BNC) formed by heme A3 and copper B (CU(B)). The BNC reduces molecular oxygen to 2 water molecules using 4 electrons from cytochrome c in the IMS and 4 protons from the mitochondrial matrix. The protein is Cytochrome c oxidase subunit 2 (mt:CoII) of Drosophila ambigua (Fruit fly).